The sequence spans 434 residues: ATP-dependent protease ATPase subunit HslU (434 aa).

ATP is bound by residues Ile18, 60–65 (GVGKTE), Asp247, Glu312, and Arg384.

Belongs to the ClpX chaperone family. HslU subfamily. A double ring-shaped homohexamer of HslV is capped on each side by a ring-shaped HslU homohexamer. The assembly of the HslU/HslV complex is dependent on binding of ATP.

It localises to the cytoplasm. ATPase subunit of a proteasome-like degradation complex; this subunit has chaperone activity. The binding of ATP and its subsequent hydrolysis by HslU are essential for unfolding of protein substrates subsequently hydrolyzed by HslV. HslU recognizes the N-terminal part of its protein substrates and unfolds these before they are guided to HslV for hydrolysis. In Brucella abortus (strain S19), this protein is ATP-dependent protease ATPase subunit HslU.